Here is a 156-residue protein sequence, read N- to C-terminus: Enhancer of split M1 protein (156 aa).

A signal peptide spans 1–19; the sequence is MMSQTLTLCCLGLVACVYG. Kazal-like domains lie at 23–81 and 96–156; these read STND…AWCS and KLEV…EEKC. Disulfide bonds link cysteine 29–cysteine 62, cysteine 33–cysteine 55, cysteine 102–cysteine 135, cysteine 106–cysteine 128, and cysteine 114–cysteine 156.

The sequence is that of Enhancer of split M1 protein from Drosophila simulans (Fruit fly).